The following is a 519-amino-acid chain: Cilia- and flagella-associated protein 53 (519 aa).

Coiled coils occupy residues 80-107 and 210-339; these read NRHL…LLES and LAKE…QEEQ. The disordered stretch occupies residues 498 to 519; that stretch reads TTAVHPFRRRDRRCSSSGGQMS.

Belongs to the CFAP53 family.

It is found in the cytoplasm. It localises to the cytoskeleton. Its subcellular location is the cilium axoneme. The protein resides in the cilium basal body. Functionally, microtubule inner protein (MIP) part of the dynein-decorated doublet microtubules (DMTs) in cilia axoneme, which is required for motile cilia beating. Regulates motility patterns of both 9+0 and 9+2 motile cilia through differential localization and recruitment of axonemal dynein components. Required for cilium motility within the spinal canal and Kuppfer's vesicle and is involved in the establishment of left-right symmetry during embryogenesis. The sequence is that of Cilia- and flagella-associated protein 53 from Danio rerio (Zebrafish).